The primary structure comprises 290 residues: Appressorium protein ROW2 (290 aa).

Residues 1-19 form the signal peptide; the sequence is MFTKSVFIALVAGVLGVTA. The segment at 266–290 is disordered; that stretch reads AIKTPSKRSVMATHVKRSPEWEEEP.

The protein resides in the secreted. It localises to the nucleus. Its function is as follows. Plays a role in the formation of the appressorium, a specialized infection structure with the purpose of penetrating the host surface, and is required for proper remodeling of the appressorium wall and vesicle secretion. This is Appressorium protein ROW2 from Mycosarcoma maydis (Corn smut fungus).